We begin with the raw amino-acid sequence, 193 residues long: Ribosomal RNA large subunit methyltransferase E (193 aa).

S-adenosyl-L-methionine-binding residues include Gly-51, Trp-53, Asp-69, Asp-85, and Asp-108. The active-site Proton acceptor is the Lys-148.

It belongs to the class I-like SAM-binding methyltransferase superfamily. RNA methyltransferase RlmE family.

The protein localises to the cytoplasm. It catalyses the reaction uridine(2552) in 23S rRNA + S-adenosyl-L-methionine = 2'-O-methyluridine(2552) in 23S rRNA + S-adenosyl-L-homocysteine + H(+). Specifically methylates the uridine in position 2552 of 23S rRNA at the 2'-O position of the ribose in the fully assembled 50S ribosomal subunit. This Methanoregula boonei (strain DSM 21154 / JCM 14090 / 6A8) protein is Ribosomal RNA large subunit methyltransferase E.